The following is a 201-amino-acid chain: MALHDENVVWHSHPVTVQQRELHHGHRGVVLWFTGLSGSGKSTVAGALEEALHKLSVSTYLLDGDNVRHGLCSDLGFSDADRKENIRRVGEVANLMVEAGLVVLTAFISPHRAERQMVRERVGEGRFIEVFVDTPLAICEARDPKGLYKKARAGELRNFTGIDSVYEAPESAEIHLNGEQLVTNLVQQLLDLLRQNDIIRS.

Position 35–42 (35–42 (GLSGSGKS)) interacts with ATP. The active-site Phosphoserine intermediate is serine 109.

This sequence belongs to the APS kinase family.

The catalysed reaction is adenosine 5'-phosphosulfate + ATP = 3'-phosphoadenylyl sulfate + ADP + H(+). Its pathway is sulfur metabolism; hydrogen sulfide biosynthesis; sulfite from sulfate: step 2/3. Catalyzes the synthesis of activated sulfate. The chain is Adenylyl-sulfate kinase from Shigella flexneri.